A 272-amino-acid polypeptide reads, in one-letter code: Nuclear transcription factor Y subunit A-1 (272 aa).

Disordered stretches follow at residues 1 to 20 and 34 to 106; these read MQSK…HAVQ and SFGV…PALS. Polar residues-rich tracts occupy residues 46 to 61 and 82 to 92; these read IPSN…GSES and KDSQAATSSRS. The short motif at 175–198 is the Subunit association domain (SAD) element; sequence YVNAKQYEGILRRRKARAKAELER. The segment at residues 205–230 is a DNA-binding region (NFYA/HAP2-type); sequence KPYLHESRHKHAMRRARASGGRFAKK. Residues 206-272 are disordered; the sequence is PYLHESRHKH…NETLNSSGAP (67 aa). Positions 211 to 221 are enriched in basic residues; that stretch reads SRHKHAMRRAR. Residues 229–247 are compositionally biased toward basic and acidic residues; the sequence is KKSEVEAGEDAGGRDRERG. Polar residues-rich tracts occupy residues 248-257 and 263-272; these read SATNSSGSEQ and NETLNSSGAP.

The protein belongs to the NFYA/HAP2 subunit family. Heterotrimeric transcription factor composed of three components, NF-YA, NF-YB and NF-YC. NF-YB and NF-YC must interact and dimerize for NF-YA association and DNA binding. Ubiquitous.

It is found in the nucleus. Its function is as follows. Stimulates the transcription of various genes by recognizing and binding to a CCAAT motif in promoters. The sequence is that of Nuclear transcription factor Y subunit A-1 (NFYA1) from Arabidopsis thaliana (Mouse-ear cress).